The primary structure comprises 196 residues: Ribosome maturation factor RimP (196 aa).

The protein belongs to the RimP family.

Its subcellular location is the cytoplasm. Required for maturation of 30S ribosomal subunits. This chain is Ribosome maturation factor RimP, found in Dinoroseobacter shibae (strain DSM 16493 / NCIMB 14021 / DFL 12).